The following is a 112-amino-acid chain: Protein lin-52 homolog (112 aa).

This sequence belongs to the lin-52 family. As to quaternary structure, component of the DREAM complex.

This Gallus gallus (Chicken) protein is Protein lin-52 homolog (LIN52).